The sequence spans 87 residues: uncharacterized protein (87 aa).

The disordered stretch occupies residues 43-87 (NQGYGQNFGDASGFMGTRSHVDDRDQIDSPASFESEAVNSSIKRK).

This is an uncharacterized protein from Bacillus subtilis (strain 168).